Reading from the N-terminus, the 122-residue chain is Large ribosomal subunit protein uL14c (122 aa).

It belongs to the universal ribosomal protein uL14 family. As to quaternary structure, part of the 50S ribosomal subunit.

The protein localises to the plastid. It localises to the chloroplast. Functionally, binds to 23S rRNA. This chain is Large ribosomal subunit protein uL14c, found in Calycanthus floridus var. glaucus (Eastern sweetshrub).